The primary structure comprises 362 residues: G-protein coupled receptor 6 (362 aa).

Residues 1-74 (MNASAASLND…PGLLLPAVNP (74 aa)) lie on the Extracellular side of the membrane. N-linked (GlcNAc...) asparagine glycosylation is found at N2, N9, and N51. A helical membrane pass occupies residues 75-94 (WDVLLCVSGTVIAGENALVV). Topologically, residues 95–106 (ALIASTPALRTP) are cytoplasmic. A helical transmembrane segment spans residues 107 to 130 (MFVLVGSLATADLLAGCGLILHFV). Over 131–142 (FQYLVPSETVSL) the chain is Extracellular. A helical membrane pass occupies residues 143–164 (LTVGFLVASFAASVSSLLAITV). Residues 165 to 185 (DRYLSLYNALTYYSRRTLLGV) are Cytoplasmic-facing. The helical transmembrane segment at 186–205 (HLLLAATWTVSLGLGLLPVL) threads the bilayer. Residues 206–230 (GWNCLAERAACSVVRPLARSHVALL) are Extracellular-facing. A helical membrane pass occupies residues 231-249 (SAAFFMVFGIMLHLYVRIC). The Cytoplasmic portion of the chain corresponds to 250–277 (QVVWRHAHQIALQQHCLAPPHLAATRKG). Residues 278 to 304 (VGTLAVVLGTFGASWLPFAIYCVVGSH) traverse the membrane as a helical segment. Topologically, residues 305–309 (EDPAV) are extracellular. Residues 310–331 (YTYATLLPATYNSMINPIIYAF) form a helical membrane-spanning segment. Residues 332 to 362 (RNQEIQRALWLLLCGCFQSKVPFRSRSPSEV) lie on the Cytoplasmic side of the membrane. C345 is lipidated: S-palmitoyl cysteine. Phosphoserine occurs at positions 356, 358, and 360.

The protein belongs to the G-protein coupled receptor 1 family.

It localises to the cell membrane. Functionally, orphan receptor with constitutive G(s) signaling activity that activate cyclic AMP. Promotes neurite outgrowth and blocks myelin inhibition in neurons. This chain is G-protein coupled receptor 6 (GPR6), found in Homo sapiens (Human).